Here is a 372-residue protein sequence, read N- to C-terminus: Alanine dehydrogenase 2 (372 aa).

Histidine 95 is an active-site residue. NAD(+) is bound at residue 169–199 (KVTIIGGGQAGTNAAKIALGLGADVTILDVN).

The protein belongs to the AlaDH/PNT family.

It catalyses the reaction L-alanine + NAD(+) + H2O = pyruvate + NH4(+) + NADH + H(+). It functions in the pathway amino-acid degradation; L-alanine degradation via dehydrogenase pathway; NH(3) and pyruvate from L-alanine: step 1/1. Its function is as follows. May play a role in cell wall synthesis as L-alanine is an important constituent of the peptidoglycan layer. The polypeptide is Alanine dehydrogenase 2 (ald2) (Staphylococcus aureus (strain COL)).